A 123-amino-acid polypeptide reads, in one-letter code: Large ribosomal subunit protein bL17 (123 aa).

The protein belongs to the bacterial ribosomal protein bL17 family. As to quaternary structure, part of the 50S ribosomal subunit. Contacts protein L32.

This chain is Large ribosomal subunit protein bL17, found in Borreliella afzelii (strain PKo) (Borrelia afzelii).